The chain runs to 349 residues: S-adenosylmethionine:tRNA ribosyltransferase-isomerase (349 aa).

Belongs to the QueA family. As to quaternary structure, monomer.

It localises to the cytoplasm. The catalysed reaction is 7-aminomethyl-7-carbaguanosine(34) in tRNA + S-adenosyl-L-methionine = epoxyqueuosine(34) in tRNA + adenine + L-methionine + 2 H(+). It participates in tRNA modification; tRNA-queuosine biosynthesis. Its function is as follows. Transfers and isomerizes the ribose moiety from AdoMet to the 7-aminomethyl group of 7-deazaguanine (preQ1-tRNA) to give epoxyqueuosine (oQ-tRNA). The protein is S-adenosylmethionine:tRNA ribosyltransferase-isomerase of Flavobacterium psychrophilum (strain ATCC 49511 / DSM 21280 / CIP 103535 / JIP02/86).